Reading from the N-terminus, the 358-residue chain is Transcription factor bHLH67 (358 aa).

The disordered stretch occupies residues 125–176 (NMTLPSSTSSPLSAHSRRKRKINHLLPQEMTREKRKRRKTKPSKNNEEIENQ). Low complexity predominate over residues 127–137 (TLPSSTSSPLS). Over residues 157 to 166 (EKRKRRKTKP) the composition is skewed to basic residues. The bHLH domain occupies 175–226 (NQRINHIAVERNRRRQMNEHINSLRALLPPSYIQRGDQASIVGGAINYVKVL).

As to quaternary structure, homodimer. In terms of tissue distribution, expressed constitutively in roots, leaves, stems, and flowers.

Its subcellular location is the nucleus. This chain is Transcription factor bHLH67 (BHLH67), found in Arabidopsis thaliana (Mouse-ear cress).